We begin with the raw amino-acid sequence, 237 residues long: F-box only protein 50 (237 aa).

Residues 31–231 (VFETKPFERN…VTDSSVIVKA (201 aa)) enclose the FBA domain. A disordered region spans residues 40–82 (NLLQNPSPYGVNHTVPPPEPHRSGIPPPSDRPPQLEPEGNFSG). Pro residues predominate over residues 64–74 (IPPPSDRPPQL).

Expressed in nonspecific cytotoxic cells (NCC).

The protein resides in the cytoplasm. May promote cell proliferation. This Danio rerio (Zebrafish) protein is F-box only protein 50 (nccrp1).